The chain runs to 108 residues: MCIGIPLQVLECAPGRALCGDDREARWIDTRLIEPPAPGDWLLVFLGAAREALDAERAAQIRDALCALQAVQAGDLAALDGLFADLDREPQLPPHLQAQLPPKEPNSP.

The tract at residues 88-108 (REPQLPPHLQAQLPPKEPNSP) is disordered.

The protein belongs to the HupF/HypC family.

This chain is Hydrogenase expression/formation protein HupN (hupN), found in Azotobacter chroococcum mcd 1.